The following is a 70-amino-acid chain: Movement protein TGBp3 (70 aa).

The Lumenal segment spans residues 1–4; the sequence is MEAG. Residues 5-27 traverse the membrane as a helical segment; that stretch reads AYLNAIIFVLVATIIAVISRGLT. Topologically, residues 28–70 are cytoplasmic; it reads RTEPCTIRITGESITVHACHIDSETIKALANLKPLSLERLSFQ.

The protein belongs to the Tymovirales TGBp3 protein family.

Its subcellular location is the host endoplasmic reticulum membrane. Functionally, plays a role in viral cell-to-cell propagation, by facilitating genome transport to neighboring plant cells through plasmosdesmata. May induce the formation of granular vesicles derived from the Endoplasmic reticulum, which align on actin filaments. The polypeptide is Movement protein TGBp3 (Potato virus X (strain CP) (PVX)).